The chain runs to 481 residues: PRAME family member 22 (481 aa).

The LRR 1; degenerate repeat unit spans residues R99–C126. The stretch at H181–Y205 is one LRR 2; degenerate repeat. The stretch at P206 to Q232 is one LRR 3; degenerate repeat. An LRR 4; degenerate repeat occupies M233 to R267. LRR repeat units lie at residues L268–L293, R294–K325, Q326–A344, A350–C377, and C378–H402.

This sequence belongs to the PRAME family.

This chain is PRAME family member 22, found in Homo sapiens (Human).